Reading from the N-terminus, the 73-residue chain is Mu-scoloptoxin(15)-Ssd1a (73 aa).

A signal peptide spans Met1 to Ala20.

Post-translationally, contains 2 disulfide bonds. As to expression, expressed by the venom gland.

It is found in the secreted. Voltage-gated sodium channel inhibitor. The protein is Mu-scoloptoxin(15)-Ssd1a of Scolopendra dehaani (Thai centipede).